Here is a 229-residue protein sequence, read N- to C-terminus: Uracil-DNA glycosylase (229 aa).

Asp-64 functions as the Proton acceptor in the catalytic mechanism.

It belongs to the uracil-DNA glycosylase (UDG) superfamily. UNG family.

It is found in the cytoplasm. It catalyses the reaction Hydrolyzes single-stranded DNA or mismatched double-stranded DNA and polynucleotides, releasing free uracil.. Functionally, excises uracil residues from the DNA which can arise as a result of misincorporation of dUMP residues by DNA polymerase or due to deamination of cytosine. The sequence is that of Uracil-DNA glycosylase from Escherichia coli O81 (strain ED1a).